A 142-amino-acid chain; its full sequence is Large ribosomal subunit protein uL11 (142 aa).

The protein belongs to the universal ribosomal protein uL11 family. In terms of assembly, part of the ribosomal stalk of the 50S ribosomal subunit. Interacts with L10 and the large rRNA to form the base of the stalk. L10 forms an elongated spine to which L12 dimers bind in a sequential fashion forming a multimeric L10(L12)X complex. In terms of processing, one or more lysine residues are methylated.

Forms part of the ribosomal stalk which helps the ribosome interact with GTP-bound translation factors. In Mycolicibacterium vanbaalenii (strain DSM 7251 / JCM 13017 / BCRC 16820 / KCTC 9966 / NRRL B-24157 / PYR-1) (Mycobacterium vanbaalenii), this protein is Large ribosomal subunit protein uL11.